We begin with the raw amino-acid sequence, 436 residues long: Eukaryotic translation initiation factor 4B (436 aa).

The disordered stretch occupies residues alanine 56 to alanine 98. Phosphoserine is present on residues serine 65 and serine 71. The region spanning tyrosine 101 to proline 183 is the RRM domain. A disordered region spans residues arginine 185–asparagine 406. A 1; approximate repeat occupies aspartate 190–proline 210. The segment at aspartate 190–phenylalanine 350 is 7 X approximate tandem repeats. 5 repeat units span residues aspartate 211–valine 232, aspartate 233–valine 258, aspartate 259–proline 284, aspartate 285–proline 310, and aspartate 311–leucine 340. Basic and acidic residues predominate over residues proline 329–proline 338. A 7; truncated repeat occupies aspartate 341–phenylalanine 350. Composition is skewed to basic and acidic residues over residues threonine 359–lysine 376 and glutamate 397–asparagine 406.

In terms of biological role, involved in translation initiation. May be the homolog of mammalian eIF4B and be part of an RNA helicase. STM1/TIF3 is a non-essential gene. The polypeptide is Eukaryotic translation initiation factor 4B (TIF3) (Saccharomyces cerevisiae (strain ATCC 204508 / S288c) (Baker's yeast)).